Here is a 1192-residue protein sequence, read N- to C-terminus: DNA topoisomerase 2 (1192 aa).

Residues Asn64, Asn95, and 142–149 (GTNGVGLK) contribute to the ATP site. The Mg(2+) site is built by Glu438, Asp539, and Asp541. Residues 707 to 1174 (IPNFLDGMTR…PGASVWLEEI (468 aa)) enclose the Topo IIA-type catalytic domain. Tyr800 serves as the catalytic O-(5'-phospho-DNA)-tyrosine intermediate.

Belongs to the type II topoisomerase family. Mg(2+) is required as a cofactor. It depends on Mn(2+) as a cofactor. Requires Ca(2+) as cofactor.

The protein localises to the host cytoplasm. It carries out the reaction ATP-dependent breakage, passage and rejoining of double-stranded DNA.. Type II topoisomerase. Processively relaxes supercoiled DNA. Displays DNA-supercoiling activity only when associated with the viral histone-like protein. The protein is DNA topoisomerase 2 (TOP) of African swine fever virus (strain Badajoz 1971 Vero-adapted) (Ba71V).